We begin with the raw amino-acid sequence, 73 residues long: Homeodomain-only protein (73 aa).

The segment at residues 3–62 (TEKSVTPTEEQLEILEYNFCKVNKHPDPTTLCLIAAETGLSEEQTLKWFKQRLAEWRKSE) is a DNA-binding region (homeobox; degenerate).

Its subcellular location is the nucleus. The protein resides in the cytoplasm. Functionally, atypical homeodomain protein which does not bind DNA and is required to modulate cardiac growth and development. May act via an interaction with SRF, leading to modulate the expression of SRF-dependent cardiac-specific genes and cardiac development. May act as a co-chaperone for HSPA1A and HSPA1B chaperone proteins and assist in chaperone-mediated protein refolding. The chain is Homeodomain-only protein (HOPX) from Gallus gallus (Chicken).